The primary structure comprises 84 residues: SPbeta prophage-derived uncharacterized protein YomY (84 aa).

The sequence is that of SPbeta prophage-derived uncharacterized protein YomY (yomY) from Bacillus subtilis (strain 168).